Reading from the N-terminus, the 168-residue chain is Peptide methionine sulfoxide reductase MsrA 2 (168 aa).

Cysteine 11 is a catalytic residue.

This sequence belongs to the MsrA Met sulfoxide reductase family.

It carries out the reaction L-methionyl-[protein] + [thioredoxin]-disulfide + H2O = L-methionyl-(S)-S-oxide-[protein] + [thioredoxin]-dithiol. It catalyses the reaction [thioredoxin]-disulfide + L-methionine + H2O = L-methionine (S)-S-oxide + [thioredoxin]-dithiol. Has an important function as a repair enzyme for proteins that have been inactivated by oxidation. Catalyzes the reversible oxidation-reduction of methionine sulfoxide in proteins to methionine. In Rhodopirellula baltica (strain DSM 10527 / NCIMB 13988 / SH1), this protein is Peptide methionine sulfoxide reductase MsrA 2.